Consider the following 219-residue polypeptide: Thiopurine S-methyltransferase (219 aa).

Residues Trp-10, Leu-45, Glu-66, and Arg-123 each contribute to the S-adenosyl-L-methionine site.

The protein belongs to the class I-like SAM-binding methyltransferase superfamily. TPMT family.

Its subcellular location is the cytoplasm. It catalyses the reaction S-adenosyl-L-methionine + a thiopurine = S-adenosyl-L-homocysteine + a thiopurine S-methylether.. In Marinobacter nauticus (strain ATCC 700491 / DSM 11845 / VT8) (Marinobacter aquaeolei), this protein is Thiopurine S-methyltransferase.